We begin with the raw amino-acid sequence, 230 residues long: Large ribosomal subunit protein uL1 (230 aa).

The protein belongs to the universal ribosomal protein uL1 family. In terms of assembly, part of the 50S ribosomal subunit.

In terms of biological role, binds directly to 23S rRNA. The L1 stalk is quite mobile in the ribosome, and is involved in E site tRNA release. Functionally, protein L1 is also a translational repressor protein, it controls the translation of the L11 operon by binding to its mRNA. The polypeptide is Large ribosomal subunit protein uL1 (Acidithiobacillus ferrooxidans (strain ATCC 53993 / BNL-5-31) (Leptospirillum ferrooxidans (ATCC 53993))).